Reading from the N-terminus, the 117-residue chain is MRVKRGMATHRRHKKYLKMAKGYRGGRSKLYRTAREAVERSLAYSTRDRKVRKREFRKLWILRINAAARENGVSYSKFIHGLALAGIELNRKVLADLAVREKEDFAKLAELVKSKLS.

It belongs to the bacterial ribosomal protein bL20 family.

Binds directly to 23S ribosomal RNA and is necessary for the in vitro assembly process of the 50S ribosomal subunit. It is not involved in the protein synthesizing functions of that subunit. The chain is Large ribosomal subunit protein bL20 from Oleidesulfovibrio alaskensis (strain ATCC BAA-1058 / DSM 17464 / G20) (Desulfovibrio alaskensis).